The chain runs to 93 residues: UPF0473 protein YrzB (93 aa).

This sequence belongs to the UPF0473 family.

This is UPF0473 protein YrzB (yrzB) from Bacillus subtilis (strain 168).